The primary structure comprises 141 residues: Venom protein family 1 protein 1 (141 aa).

The N-terminal stretch at 1–17 (MKSFIVVLCCLFAITYG) is a signal peptide. A disulfide bond links Cys62 and Cys139.

Belongs to the insect vpf1 family. In terms of tissue distribution, expressed by the venom gland (posterior main gland) (at protein level).

It is found in the secreted. This Platymeris rhadamanthus (Red spot assassin bug) protein is Venom protein family 1 protein 1.